Reading from the N-terminus, the 462-residue chain is Receptor like protein 29 (462 aa).

The first 26 residues, 1 to 26 (MTMKRALPSPSSLLFFFLLITPLFLC), serve as a signal peptide directing secretion. The Extracellular segment spans residues 27–441 (QENRVSASMP…SQASRYYRSC (415 aa)). N-linked (GlcNAc...) asparagine glycosylation is present at asparagine 139. 10 LRR repeats span residues 139–164 (NSSL…ISSL), 165–188 (KSLQ…IFSL), 190–212 (SLVH…LGNL), 213–236 (NNLV…ISQL), 238–260 (MLQK…VEKL), 261–284 (RSLS…ISNL), 286–308 (SLQY…LGFL), 309–331 (PKLQ…SYTK), 332–355 (LTNL…GFES), and 357–381 (PHVF…SFLR). N-linked (GlcNAc...) asparagine glycosylation is found at asparagine 334, asparagine 363, and asparagine 416. Residues 442–462 (FFANALFPFALFLGLHQRWVL) traverse the membrane as a helical segment.

This sequence belongs to the RLP family.

Its subcellular location is the cell membrane. The polypeptide is Receptor like protein 29 (Arabidopsis thaliana (Mouse-ear cress)).